A 61-amino-acid chain; its full sequence is Small ribosomal subunit protein uS14 (61 aa).

Residues cysteine 24, cysteine 27, cysteine 40, and cysteine 43 each coordinate Zn(2+).

The protein belongs to the universal ribosomal protein uS14 family. Zinc-binding uS14 subfamily. In terms of assembly, part of the 30S ribosomal subunit. Contacts proteins S3 and S10. Requires Zn(2+) as cofactor.

Its function is as follows. Binds 16S rRNA, required for the assembly of 30S particles and may also be responsible for determining the conformation of the 16S rRNA at the A site. This is Small ribosomal subunit protein uS14 from Nautilia profundicola (strain ATCC BAA-1463 / DSM 18972 / AmH).